Consider the following 431-residue polypeptide: Adenylosuccinate synthetase (431 aa).

GTP-binding positions include 12 to 18 and 40 to 42; these read GDEGKGK and GHT. Residue Asp13 is the Proton acceptor of the active site. Mg(2+) is bound by residues Asp13 and Gly40. IMP is bound by residues 13-16, 38-41, Thr128, Arg142, Gln225, Thr240, and Arg304; these read DEGK and NAGH. The active-site Proton donor is His41. 300 to 306 contacts substrate; the sequence is TTTGRPR. GTP-binding positions include Arg306, 332–334, and 414–416; these read KLD and GVG.

It belongs to the adenylosuccinate synthetase family. Homodimer. Mg(2+) is required as a cofactor.

Its subcellular location is the cytoplasm. The catalysed reaction is IMP + L-aspartate + GTP = N(6)-(1,2-dicarboxyethyl)-AMP + GDP + phosphate + 2 H(+). It functions in the pathway purine metabolism; AMP biosynthesis via de novo pathway; AMP from IMP: step 1/2. Functionally, plays an important role in the de novo pathway of purine nucleotide biosynthesis. Catalyzes the first committed step in the biosynthesis of AMP from IMP. In Thermomicrobium roseum (strain ATCC 27502 / DSM 5159 / P-2), this protein is Adenylosuccinate synthetase.